The sequence spans 330 residues: Nuclear apoptosis-inducing factor 1 (330 aa).

The interval Met1–Lys74 is required for nuclear localization and apoptosis-inducing activity. 3 disordered regions span residues Ala92–Thr117, Cys147–Ser175, and Asn309–Gln330. Gly residues predominate over residues Glu95–Thr108.

It belongs to the NAIF1 family.

The protein resides in the nucleus. In terms of biological role, induces apoptosis. This chain is Nuclear apoptosis-inducing factor 1 (NAIF1), found in Gallus gallus (Chicken).